A 425-amino-acid polypeptide reads, in one-letter code: UDP-N-acetylglucosamine 1-carboxyvinyltransferase (425 aa).

23–24 (KN) is a binding site for phosphoenolpyruvate. Arg-100 contributes to the UDP-N-acetyl-alpha-D-glucosamine binding site. Cys-124 acts as the Proton donor in catalysis. Cys-124 carries the 2-(S-cysteinyl)pyruvic acid O-phosphothioketal modification. Residues 169 to 172 (KVSV), Asp-313, and Val-335 each bind UDP-N-acetyl-alpha-D-glucosamine.

This sequence belongs to the EPSP synthase family. MurA subfamily.

It is found in the cytoplasm. It carries out the reaction phosphoenolpyruvate + UDP-N-acetyl-alpha-D-glucosamine = UDP-N-acetyl-3-O-(1-carboxyvinyl)-alpha-D-glucosamine + phosphate. The protein operates within cell wall biogenesis; peptidoglycan biosynthesis. Cell wall formation. Adds enolpyruvyl to UDP-N-acetylglucosamine. In Wolbachia pipientis subsp. Culex pipiens (strain wPip), this protein is UDP-N-acetylglucosamine 1-carboxyvinyltransferase.